The following is a 336-amino-acid chain: Glycerol-3-phosphate dehydrogenase [NAD(P)+] (336 aa).

NADPH contacts are provided by S14, W15, R35, R36, and K109. 2 residues coordinate sn-glycerol 3-phosphate: K109 and G139. A143 is an NADPH binding site. K194, D247, S257, R258, and N259 together coordinate sn-glycerol 3-phosphate. Catalysis depends on K194, which acts as the Proton acceptor. An NADPH-binding site is contributed by R258. E284 serves as a coordination point for NADPH.

The protein belongs to the NAD-dependent glycerol-3-phosphate dehydrogenase family.

It is found in the cytoplasm. The enzyme catalyses sn-glycerol 3-phosphate + NAD(+) = dihydroxyacetone phosphate + NADH + H(+). The catalysed reaction is sn-glycerol 3-phosphate + NADP(+) = dihydroxyacetone phosphate + NADPH + H(+). The protein operates within membrane lipid metabolism; glycerophospholipid metabolism. In terms of biological role, catalyzes the reduction of the glycolytic intermediate dihydroxyacetone phosphate (DHAP) to sn-glycerol 3-phosphate (G3P), the key precursor for phospholipid synthesis. This is Glycerol-3-phosphate dehydrogenase [NAD(P)+] from Streptomyces avermitilis (strain ATCC 31267 / DSM 46492 / JCM 5070 / NBRC 14893 / NCIMB 12804 / NRRL 8165 / MA-4680).